Consider the following 123-residue polypeptide: cAMP-responsive element-binding protein-like 2 (123 aa).

Residues 1-24 form a disordered region; sequence MDDSKVVGGKVKKPGKRGRKPAKI. Positions 10 to 21 are enriched in basic residues; it reads KVKKPGKRGRKP. Residues 23-86 enclose the bZIP domain; it reads KIDLKAKLER…MAMDQGKIPS (64 aa). The basic motif stretch occupies residues 29–60; the sequence is KLERSRQSARECRARKKLRYQYLEELVSSRER. The tract at residues 62 to 69 is leucine-zipper; sequence ICALREEL. The segment at 92–123 is disordered; sequence LTGEEQSKPQQNSSRHPKAGKTDANTNSLVGN. The span at 114–123 shows a compositional bias: polar residues; that stretch reads DANTNSLVGN.

It belongs to the bZIP family. ATF subfamily. In terms of assembly, interacts with CREB1; regulates CREB1 phosphorylation, stability and transcriptional activity. Phosphorylated by AMPK. In terms of tissue distribution, widely expressed with higher expression in adipose tissue, skeletal muscle, and liver (at protein level).

It is found in the nucleus. In terms of biological role, probable regulator of CREB1 transcriptional activity which is involved in adipose cells differentiation. May also play a regulatory role in the cell cycle. This chain is cAMP-responsive element-binding protein-like 2 (Crebl2), found in Mus musculus (Mouse).